A 440-amino-acid chain; its full sequence is UDP-N-acetylmuramoylalanine--D-glutamate ligase (440 aa).

115–121 (GSNGKST) contacts ATP.

The protein belongs to the MurCDEF family.

The protein localises to the cytoplasm. It catalyses the reaction UDP-N-acetyl-alpha-D-muramoyl-L-alanine + D-glutamate + ATP = UDP-N-acetyl-alpha-D-muramoyl-L-alanyl-D-glutamate + ADP + phosphate + H(+). It functions in the pathway cell wall biogenesis; peptidoglycan biosynthesis. Cell wall formation. Catalyzes the addition of glutamate to the nucleotide precursor UDP-N-acetylmuramoyl-L-alanine (UMA). The chain is UDP-N-acetylmuramoylalanine--D-glutamate ligase from Vibrio cholerae serotype O1 (strain ATCC 39315 / El Tor Inaba N16961).